The following is a 453-amino-acid chain: Putative receptor-like protein kinase At2g30940 (453 aa).

Residues 60–80 traverse the membrane as a helical segment; it reads ASASIAFLLVLIISVLLCFIF. At Thr155 the chain carries Phosphothreonine. Positions 166 to 428 constitute a Protein kinase domain; it reads FADDNVITKG…IHMLQPHDLL (263 aa). Residues 172–180 and Lys194 each bind ATP; that span reads ITKGDSSTV. Tyr240 is subject to Phosphotyrosine. The active-site Proton acceptor is Asp293. A Phosphoserine modification is found at Ser297. Thr322 is subject to Phosphothreonine.

It belongs to the protein kinase superfamily.

Its subcellular location is the cell membrane. It catalyses the reaction L-seryl-[protein] + ATP = O-phospho-L-seryl-[protein] + ADP + H(+). The enzyme catalyses L-threonyl-[protein] + ATP = O-phospho-L-threonyl-[protein] + ADP + H(+). This Arabidopsis thaliana (Mouse-ear cress) protein is Putative receptor-like protein kinase At2g30940.